Here is a 557-residue protein sequence, read N- to C-terminus: MSNSNQPLLSKPKSLKHKNLCLVLSFVAILGSVAFFTAQLISVNTNNNDDSLLTTSQICHGAHDQDSCQALLSEFTTLSLSKLNRLDLLHVFLKNSVWRLESTMTMVSEARIRSNGVRDKAGFADCEEMMDVSKDRMMSSMEELRGGNYNLESYSNVHTWLSSVLTNYMTCLESISDVSVNSKQIVKPQLEDLVSRARVALAIFVSVLPARDDLKMIISNRFPSWLTALDRKLLESSPKTLKVTANVVVAKDGTGKFKTVNEAVAAAPENSNTRYVIYVKKGVYKETIDIGKKKKNLMLVGDGKDATIITGSLNVIDGSTTFRSATVAANGDGFMAQDIWFQNTAGPAKHQAVALRVSADQTVINRCRIDAYQDTLYTHTLRQFYRDSYITGTVDFIFGNSAVVFQNCDIVARNPGAGQKNMLTAQGREDQNQNTAISIQKCKITASSDLAPVKGSVKTFLGRPWKLYSRTVIMQSFIDNHIDPAGWFPWDGEFALSTLYYGEYANTGPGADTSKRVNWKGFKVIKDSKEAEQFTVAKLIQGGLWLKPTGVTFQEWL.

The signal sequence occupies residues 1–34 (MSNSNQPLLSKPKSLKHKNLCLVLSFVAILGSVA). A pectinesterase inhibitor 18 region spans residues 47–203 (NNDDSLLTTS…VSRARVALAI (157 aa)). The tract at residues 246–543 (NVVVAKDGTG…FTVAKLIQGG (298 aa)) is pectinesterase 18. 2 residues coordinate substrate: Thr321 and Gln351. Asp374 (proton donor; for pectinesterase activity) is an active-site residue. The Nucleophile; for pectinesterase activity role is filled by Asp395. Substrate is bound by residues Arg463 and Trp465.

In the N-terminal section; belongs to the PMEI family. This sequence in the C-terminal section; belongs to the pectinesterase family. As to expression, expressed in siliques, flowers, floral stems, rosette leaves and roots.

The protein localises to the secreted. Its subcellular location is the cell wall. The enzyme catalyses [(1-&gt;4)-alpha-D-galacturonosyl methyl ester](n) + n H2O = [(1-&gt;4)-alpha-D-galacturonosyl](n) + n methanol + n H(+). It carries out the reaction Endohydrolysis of the N-glycosidic bond at one specific adenosine on the 28S rRNA.. The protein operates within glycan metabolism; pectin degradation; 2-dehydro-3-deoxy-D-gluconate from pectin: step 1/5. Acts in the modification of cell walls via demethylesterification of cell wall pectin. Inhibits the elongation phase of protein synthesis. This is Pectinesterase/pectinesterase inhibitor 18 (PME18) from Arabidopsis thaliana (Mouse-ear cress).